We begin with the raw amino-acid sequence, 347 residues long: S-adenosylmethionine:tRNA ribosyltransferase-isomerase (347 aa).

It belongs to the QueA family. As to quaternary structure, monomer.

The protein localises to the cytoplasm. The catalysed reaction is 7-aminomethyl-7-carbaguanosine(34) in tRNA + S-adenosyl-L-methionine = epoxyqueuosine(34) in tRNA + adenine + L-methionine + 2 H(+). Its pathway is tRNA modification; tRNA-queuosine biosynthesis. Functionally, transfers and isomerizes the ribose moiety from AdoMet to the 7-aminomethyl group of 7-deazaguanine (preQ1-tRNA) to give epoxyqueuosine (oQ-tRNA). The chain is S-adenosylmethionine:tRNA ribosyltransferase-isomerase from Xylella fastidiosa (strain M12).